Reading from the N-terminus, the 495-residue chain is IQ domain-containing protein IQM5 (495 aa).

A disordered region spans residues 89-122 (ENRGGEEEDERGSSPKRRNRGNLTALSLPAPTPF). The IQ domain occupies 131 to 160 (LDAAAVTLQKVYKSYRTRRNLADCAVVVEE).

In terms of tissue distribution, expressed in roots, rosette and cauline leaves, and at lower levels in stems, flowers and siliques.

It is found in the cytoplasm. It localises to the nucleus. Its function is as follows. May be involved in biotic and abiotic stress responses. The sequence is that of IQ domain-containing protein IQM5 from Arabidopsis thaliana (Mouse-ear cress).